The following is a 304-amino-acid chain: ATP phosphoribosyltransferase (304 aa).

This sequence belongs to the ATP phosphoribosyltransferase family. Long subfamily. Mg(2+) is required as a cofactor.

The protein resides in the cytoplasm. The enzyme catalyses 1-(5-phospho-beta-D-ribosyl)-ATP + diphosphate = 5-phospho-alpha-D-ribose 1-diphosphate + ATP. It participates in amino-acid biosynthesis; L-histidine biosynthesis; L-histidine from 5-phospho-alpha-D-ribose 1-diphosphate: step 1/9. With respect to regulation, feedback inhibited by histidine. Functionally, catalyzes the condensation of ATP and 5-phosphoribose 1-diphosphate to form N'-(5'-phosphoribosyl)-ATP (PR-ATP). Has a crucial role in the pathway because the rate of histidine biosynthesis seems to be controlled primarily by regulation of HisG enzymatic activity. The polypeptide is ATP phosphoribosyltransferase (Xanthomonas campestris pv. campestris (strain 8004)).